The chain runs to 410 residues: Pyrophosphate--fructose 6-phosphate 1-phosphotransferase (410 aa).

Residue G12 participates in diphosphate binding. D121 serves as a coordination point for Mg(2+). Residues 149 to 151, 194 to 196, E266, and 323 to 326 each bind substrate; these read TID, MGR, and YFSR. D151 (proton acceptor) is an active-site residue.

This sequence belongs to the phosphofructokinase type A (PFKA) family. PPi-dependent PFK group II subfamily. Clade 'P' sub-subfamily. As to quaternary structure, homodimer or homotetramer. It depends on Mg(2+) as a cofactor.

The protein localises to the cytoplasm. It carries out the reaction beta-D-fructose 6-phosphate + diphosphate = beta-D-fructose 1,6-bisphosphate + phosphate + H(+). It functions in the pathway carbohydrate degradation; glycolysis; D-glyceraldehyde 3-phosphate and glycerone phosphate from D-glucose: step 3/4. With respect to regulation, non-allosteric. Catalyzes the phosphorylation of D-fructose 6-phosphate, the first committing step of glycolysis. Uses inorganic phosphate (PPi) as phosphoryl donor instead of ATP like common ATP-dependent phosphofructokinases (ATP-PFKs), which renders the reaction reversible, and can thus function both in glycolysis and gluconeogenesis. Consistently, PPi-PFK can replace the enzymes of both the forward (ATP-PFK) and reverse (fructose-bisphosphatase (FBPase)) reactions. The chain is Pyrophosphate--fructose 6-phosphate 1-phosphotransferase from Mastigamoeba balamuthi (Phreatamoeba balamuthi).